Consider the following 432-residue polypeptide: Glutamate-1-semialdehyde 2,1-aminomutase 2 (432 aa).

At Lys-268 the chain carries N6-(pyridoxal phosphate)lysine.

Belongs to the class-III pyridoxal-phosphate-dependent aminotransferase family. HemL subfamily. Homodimer. It depends on pyridoxal 5'-phosphate as a cofactor.

The protein localises to the cytoplasm. It catalyses the reaction (S)-4-amino-5-oxopentanoate = 5-aminolevulinate. It functions in the pathway porphyrin-containing compound metabolism; protoporphyrin-IX biosynthesis; 5-aminolevulinate from L-glutamyl-tRNA(Glu): step 2/2. This chain is Glutamate-1-semialdehyde 2,1-aminomutase 2, found in Listeria welshimeri serovar 6b (strain ATCC 35897 / DSM 20650 / CCUG 15529 / CIP 8149 / NCTC 11857 / SLCC 5334 / V8).